The chain runs to 25 residues: Omega-conotoxin CVIB (25 aa).

3 disulfides stabilise this stretch: C1–C16, C8–C20, and C15–C25. A Cysteine amide modification is found at C25.

Belongs to the conotoxin O1 superfamily. As to expression, expressed by the venom duct.

The protein resides in the secreted. Its function is as follows. Omega-conotoxins act at presynaptic membranes, they bind and block voltage-gated calcium channels (Cav). This toxin blocks N-, P- and Q-type calcium channels. It shows high activities on Cav2.1/CACNA1A (IC(50)=11 nM) and Cav2.2/CACNA1B (IC(50)=7.7 nM). In addition, it shows a higher potency when Cav2.2/CACNA1B is only expressed with the ancillary subunit CACNB3 (IC(50)=1.6 nM) than on Cav2.2/CACNA1B expressed with the ancillary subunits CACNA2D1 and CACNB3 (IC(50)=12 nM). Both the Cav2.2/CACNA1B block by this toxin and the recovery are voltage-independent. It is noteworthy that ancillary subunits beta do not modulate recovery from this toxin block, since Cav2.2/CACNA1B expressed with either the ancillary subunit CACNB2a (isoform 2a) or with CACNB3 exhibits moderate recovery. The polypeptide is Omega-conotoxin CVIB (Conus catus (Cat cone)).